The following is a 532-amino-acid chain: Ankyrin repeat-containing protein At2g01680 (532 aa).

ANK repeat units follow at residues 9 to 38 (LTHQ…GDEL), 58 to 89 (AGET…TVKI), 93 to 122 (SDMN…ELCR), 127 to 156 (SNTS…SCAM), 161 to 190 (NGKT…AIVG), 195 to 224 (KGQT…TILN), and 229 to 259 (KGNT…EVNA). The next 4 membrane-spanning stretches (helical) occupy residues 354-374 (ITVV…NLPG), 396-416 (VFCL…VVQI), 436-456 (LMWA…FAVV), and 467-487 (ITLL…YFVF).

The protein localises to the membrane. The sequence is that of Ankyrin repeat-containing protein At2g01680 from Arabidopsis thaliana (Mouse-ear cress).